A 184-amino-acid polypeptide reads, in one-letter code: NADH-quinone oxidoreductase subunit B (184 aa).

The [4Fe-4S] cluster site is built by cysteine 37, cysteine 38, cysteine 103, and cysteine 132.

This sequence belongs to the complex I 20 kDa subunit family. As to quaternary structure, NDH-1 is composed of 14 different subunits. Subunits NuoB, C, D, E, F, and G constitute the peripheral sector of the complex. It depends on [4Fe-4S] cluster as a cofactor.

The protein localises to the cell membrane. It catalyses the reaction a quinone + NADH + 5 H(+)(in) = a quinol + NAD(+) + 4 H(+)(out). NDH-1 shuttles electrons from NADH, via FMN and iron-sulfur (Fe-S) centers, to quinones in the respiratory chain. The immediate electron acceptor for the enzyme in this species is believed to be a menaquinone. Couples the redox reaction to proton translocation (for every two electrons transferred, four hydrogen ions are translocated across the cytoplasmic membrane), and thus conserves the redox energy in a proton gradient. This chain is NADH-quinone oxidoreductase subunit B, found in Mycobacteroides abscessus (strain ATCC 19977 / DSM 44196 / CCUG 20993 / CIP 104536 / JCM 13569 / NCTC 13031 / TMC 1543 / L948) (Mycobacterium abscessus).